Consider the following 308-residue polypeptide: Limonin dehydrogenase (308 aa).

It belongs to the aldehyde dehydrogenase family.

It localises to the periplasm. With respect to regulation, completely inhibited by HgCl(2), CoCl(2) and CaCl(2). Its function is as follows. Catalyzes the NAD(+)-dependent conversion of limonin. The sequence is that of Limonin dehydrogenase from Pseudomonas putida (Arthrobacter siderocapsulatus).